A 317-amino-acid polypeptide reads, in one-letter code: Melanocyte-stimulating hormone receptor (317 aa).

Residues 1–37 (MPVQGSLRSLVGAVNSTPTASPHLRPATNQTEPQCLE) lie on the Extracellular side of the membrane. The N-linked (GlcNAc...) asparagine glycan is linked to Asn-29. Residues 38–63 (VSVPVGLFLCLGLVSLVENTLVVAVI) form a helical membrane-spanning segment. Over 64-72 (AKNRNLHSP) the chain is Cytoplasmic. A helical membrane pass occupies residues 73-93 (MYCFICCLALSDLLVSVSNVL). The Extracellular portion of the chain corresponds to 94–118 (KTAVLLLLEAGALAAQATVVQQLGN). Residues 119–140 (VINMLICSSMVSSLCFLGAIAM) traverse the membrane as a helical segment. Over 141 to 163 (DRYISIFYALRYHSIVTLARARR) the chain is Cytoplasmic. A helical transmembrane segment spans residues 164–183 (AIAAVWVASILSSILFFTYY). Over 184-191 (DRTAALLC) the chain is Extracellular. The chain crosses the membrane as a helical span at residues 192-211 (LVVFFLAMLVLMAVLYVHML). The Cytoplasmic portion of the chain corresponds to 212–240 (TQACQHAQGIARLHKRQHPVQQGWGLKGA). The chain crosses the membrane as a helical span at residues 241–266 (ATLAVLLGVFFLCWGPLFLHLTLIAV). Residues 267–279 (CPQHPTCNCIVKN) are Extracellular-facing. The chain crosses the membrane as a helical span at residues 280–300 (FKLFLALIICNAIVDPLIYAF). Topologically, residues 301–317 (RSQELRKTLKEVLLFSW) are cytoplasmic.

The protein belongs to the G-protein coupled receptor 1 family. In terms of assembly, interacts with MGRN1, but does not undergo MGRN1-mediated ubiquitination; this interaction competes with GNAS-binding and thus inhibits agonist-induced cAMP production. Interacts with OPN3; the interaction results in a decrease in MC1R-mediated cAMP signaling and ultimately a decrease in melanin production in melanocytes.

It localises to the cell membrane. Receptor for MSH (alpha, beta and gamma) and ACTH. The activity of this receptor is mediated by G proteins which activate adenylate cyclase. Mediates melanogenesis, the production of eumelanin (black/brown) and phaeomelanin (red/yellow), via regulation of cAMP signaling in melanocytes. In Varecia rubra (Red ruffed lemur), this protein is Melanocyte-stimulating hormone receptor (MC1R).